The following is a 254-amino-acid chain: Isoprenyl transferase (254 aa).

The active site involves D23. Residue D23 coordinates Mg(2+). Residues 24–27 (GNGR), W28, R36, H40, and 68–70 (STE) each bind substrate. N71 serves as the catalytic Proton acceptor. Residues W72, R74, R191, and 197-199 (RIS) contribute to the substrate site. E210 serves as a coordination point for Mg(2+).

Belongs to the UPP synthase family. As to quaternary structure, homodimer. The cofactor is Mg(2+).

Catalyzes the condensation of isopentenyl diphosphate (IPP) with allylic pyrophosphates generating different type of terpenoids. In Porphyromonas gingivalis (strain ATCC BAA-308 / W83), this protein is Isoprenyl transferase.